A 303-amino-acid chain; its full sequence is sn-1-specific diacylglycerol lipase ABHD11 (303 aa).

Residues 1 to 22 (MLRWTRAWTAPYRGIGLSNSSF) constitute a mitochondrion transit peptide. An AB hydrolase-1 domain is found at 55–290 (PALVFLHGLF…NAGHWVHSDR (236 aa)). Lys75 carries the post-translational modification N6-succinyllysine. Residues Ser129, Asp225, and His284 each act as charge relay system in the active site.

It belongs to the AB hydrolase superfamily. As to quaternary structure, interacts with OGDH and DLST; this interaction maintains the functional lipoylation of the 2-oxoglutarate dehydrogenase complex. In terms of processing, phosphorylated.

The protein resides in the mitochondrion. It is found in the mitochondrion matrix. It catalyses the reaction a 1,3-diacyl-sn-glycerol + H2O = a 1-acyl-sn-glycerol + a fatty acid + H(+). The enzyme catalyses 1-octadecanoyl-2-(9Z-octadecenoyl)-sn-glycerol + H2O = 2-(9Z-octadecenoyl)-glycerol + octadecanoate + H(+). The catalysed reaction is 1-octadecanoyl-2-(4Z,7Z,10Z,13Z,16Z,19Z-docosahexaenoyl)-sn-glycerol + H2O = 2-(4Z,7Z,10Z,13Z,16Z,19Z-docosahexaenoyl)-glycerol + octadecanoate + H(+). It carries out the reaction a 1,2-diacyl-sn-glycerol + H2O = a 2-acylglycerol + a fatty acid + H(+). It catalyses the reaction 1,2-didecanoylglycerol + H2O = decanoylglycerol + decanoate + H(+). The enzyme catalyses 1-octadecanoyl-2-(5Z,8Z,11Z,14Z-eicosatetraenoyl)-sn-glycerol + H2O = 2-(5Z,8Z,11Z,14Z-eicosatetraenoyl)-glycerol + octadecanoate + H(+). Its activity is regulated as follows. The diacylglycerol lipase activity can be modulated by phosphorylation by cAMP-dependent protein kinase. Its function is as follows. Catalyzes the hydrolysis of diacylglycerol in vitro and may function as a key regulator in lipid metabolism, namely by regulating the intracellular levels of diacylglycerol. 1,2-diacyl-sn-glycerols are the preferred substrate over 1,3-diacyl-sn-glycerols. The enzyme hydrolyzes stearate in preference to palmitate from the sn-1 position of 1,2-diacyl-sn-glycerols. Maintains the functional lipoylation of the 2-oxoglutarate dehydrogenase complex (OGDHc) through its interaction with the OGDHc by preventing the formation of lipoyl adducts. In addition, is also required for the expansion and differentiation of embryonic stem cells (ESCs). This is sn-1-specific diacylglycerol lipase ABHD11 from Bos taurus (Bovine).